We begin with the raw amino-acid sequence, 515 residues long: MADLSFSDGDPTVRTLLRRVLETADSRTPMRRRSTRINAQRRRSQTPYSNRQGSQTKTSARKQSHGARSVGRSTRVQGRGRLEEQTPRTLLRNILLTAPESSTVMPDPVVKPAQVPEVARSSRRESSRGSLELHLPELEPPSTLAPGLTAPGKRKQKLRLSVFQQEVDQGLPLSQEPRRSRSADVSSLASSFNLTFVLPGQPETVERPGLARRRPIRQLVNAGALLQDLEDNSLASALPGDSHRTPVAALPMDVGLEDTQPFSQSLAAFSLSGKHSLPSPSRPGVEDVERVMGPPSSGTRLQSRMSRSGPAASPSPFLEPQPPPAEPREAVGSNEAAEPKDQEGSSGYEETSARPASGELSSSTHDSLPAEQPPPSPGVAVLSSEPLESVTAKCPSRTQTAGPRRRQDPHKAGLSPYVKFFSFCTKMPVEKTALEIVEKCLDKYFQHLCNDLEVFASHAGRKIVKPEDLLLLMRRQGLVTDQVSQHVLVERYLPLEYRQQLIPCAFSGNSVFPAQ.

2 disordered regions span residues 24-156 (ADSR…KRKQ) and 271-411 (LSGK…DPHK). Residues 29–44 (PMRRRSTRINAQRRRS) are compositionally biased toward basic residues. The segment covering 45-58 (QTPYSNRQGSQTKT) has biased composition (polar residues). The residue at position 86 (Thr86) is a Phosphothreonine. A flexible stalk domain region spans residues 94–375 (ILLTAPESST…DSLPAEQPPP (282 aa)). The segment covering 296 to 306 (SSGTRLQSRMS) has biased composition (polar residues). Phosphoserine occurs at positions 313, 333, 345, 346, 357, and 376.

The protein belongs to the CENP-T/CNN1 family. As to quaternary structure, component of the CENPA-CAD complex, composed of CENPI, CENPK, CENPL, CENPO, CENPP, CENPQ, CENPR and CENPS. The CENPA-CAD complex is probably recruited on centromeres by the CENPA-NAC complex, at least composed of CENPA, CENPC, CENPH, CENPM, CENPN, CENPT and CENPU. Identified in a centromeric complex containing histones H2A, H2B, H3 and H4, and at least CENPA, CENPB, CENPC, CENPT, CENPN, HJURP, SUPT16H, SSRP1 and RSF1. Interacts (via N-terminus) with the NDC80 complex. Heterodimer with CENPW; this dimer coassembles with CENPS-CENPX heterodimers at centromeres to form the tetrameric CENP-T-W-S-X complex. Dynamically phosphorylated during the cell cycle. Phosphorylated during G2 phase, metaphase and anaphase, but not during telophase or G1 phase.

The protein localises to the nucleus. The protein resides in the chromosome. It localises to the centromere. Its subcellular location is the kinetochore. Functionally, component of the CENPA-NAC (nucleosome-associated) complex, a complex that plays a central role in assembly of kinetochore proteins, mitotic progression and chromosome segregation. The CENPA-NAC complex recruits the CENPA-CAD (nucleosome distal) complex and may be involved in incorporation of newly synthesized CENPA into centromeres. Part of a nucleosome-associated complex that binds specifically to histone H3-containing nucleosomes at the centromere, as opposed to nucleosomes containing CENPA. Component of the heterotetrameric CENP-T-W-S-X complex that binds and supercoils DNA, and plays an important role in kinetochore assembly. CENPT has a fundamental role in kinetochore assembly and function. It is one of the inner kinetochore proteins, with most further proteins binding downstream. Required for normal chromosome organization and normal progress through mitosis. In Mus musculus (Mouse), this protein is Centromere protein T (Cenpt).